Reading from the N-terminus, the 793-residue chain is Ribosome biogenesis protein BOP1 homolog (793 aa).

A compositionally biased stretch (basic residues) spans 1 to 11 (MTKKLTLKRKG). The disordered stretch occupies residues 1–168 (MTKKLTLKRK…DSDTSDEEDI (168 aa)). Acidic residues-rich tracts occupy residues 44-53 (EDTTDDEGID), 60-72 (SSED…DEEG), and 83-116 (SSEE…DGDE). Positions 117 to 129 (EKPTTSKQNKSED) are enriched in basic and acidic residues. Polar residues predominate over residues 133–143 (SSKVSKKTQPP). Basic and acidic residues predominate over residues 146–161 (DLVKRDPSHPEYHDSD). WD repeat units lie at residues 454–495 (GHTD…RTIE), 497–535 (EDVV…KVLV), 579–621 (NHFK…SQIP), 624–662 (KSKG…LVKK), 665–704 (TNSK…KPYQ), 708–747 (LHRN…DLLQ), and 763–793 (REDF…RLYT).

It belongs to the WD repeat BOP1/ERB1 family.

It is found in the nucleus. The protein localises to the nucleolus. Its subcellular location is the nucleoplasm. Its function is as follows. Required for maturation of ribosomal RNAs and formation of the large ribosomal subunit. In Drosophila ananassae (Fruit fly), this protein is Ribosome biogenesis protein BOP1 homolog.